The sequence spans 329 residues: Endochitinase A (329 aa).

An N-terminal signal peptide occupies residues 1–23; sequence MRLCKFTALSSLLFSLLLLSASA. The Chitin-binding type-1 domain occupies 24–65; it reads EQCGSQAGGARCPSGLCCSKFGWCGNTNDYCGPGNCQSQCPG. Disulfide bonds link Cys-26-Cys-41, Cys-35-Cys-47, Cys-40-Cys-54, and Cys-59-Cys-63. Pro-67 carries the 4-hydroxyproline; partial modification. 4-hydroxyproline is present on residues Pro-69, Pro-71, Pro-72, and Pro-74. Pro-75 carries the post-translational modification 4-hydroxyproline; partial. Cystine bridges form between Cys-101–Cys-163, Cys-175–Cys-183, and Cys-282–Cys-314. Glu-145 acts as the Proton donor in catalysis. A propeptide spans 323-329 (removed in mature form); it reads GLLVDTM.

It belongs to the glycosyl hydrolase 19 family. Chitinase class I subfamily. Post-translationally, the 4-hydroxyproline residues are not glycosylated in this plant vacuolar protein.

It is found in the vacuole. It catalyses the reaction Random endo-hydrolysis of N-acetyl-beta-D-glucosaminide (1-&gt;4)-beta-linkages in chitin and chitodextrins.. In terms of biological role, defense against chitin-containing fungal pathogens. The sequence is that of Endochitinase A (CHN48) from Nicotiana tabacum (Common tobacco).